A 234-amino-acid chain; its full sequence is 2-C-methyl-D-erythritol 4-phosphate cytidylyltransferase (234 aa).

The protein belongs to the IspD/TarI cytidylyltransferase family. IspD subfamily.

The enzyme catalyses 2-C-methyl-D-erythritol 4-phosphate + CTP + H(+) = 4-CDP-2-C-methyl-D-erythritol + diphosphate. It participates in isoprenoid biosynthesis; isopentenyl diphosphate biosynthesis via DXP pathway; isopentenyl diphosphate from 1-deoxy-D-xylulose 5-phosphate: step 2/6. Catalyzes the formation of 4-diphosphocytidyl-2-C-methyl-D-erythritol from CTP and 2-C-methyl-D-erythritol 4-phosphate (MEP). The protein is 2-C-methyl-D-erythritol 4-phosphate cytidylyltransferase of Photobacterium profundum (strain SS9).